Here is a 211-residue protein sequence, read N- to C-terminus: Adenylate kinase (211 aa).

Residue 10 to 15 coordinates ATP; that stretch reads GSGKGT. Positions 30–59 are NMP; sequence STGDLFRENILNSTTLGKEIKKIVEKGELV. AMP is bound by residues threonine 31, arginine 36, 57-59, 85-88, and glutamine 92; these read ELV and GFPR. Residues 121 to 158 are LID; sequence GRRICKSCNNIFNIYTLATKKNGICDVCKGDLYQREDD. ATP is bound at residue arginine 122. Positions 125 and 128 each coordinate Zn(2+). 131-132 serves as a coordination point for ATP; the sequence is IF. Residues cysteine 145 and cysteine 148 each contribute to the Zn(2+) site. AMP contacts are provided by arginine 155 and arginine 166. Valine 194 serves as a coordination point for ATP.

It belongs to the adenylate kinase family. As to quaternary structure, monomer.

It localises to the cytoplasm. The catalysed reaction is AMP + ATP = 2 ADP. It participates in purine metabolism; AMP biosynthesis via salvage pathway; AMP from ADP: step 1/1. Functionally, catalyzes the reversible transfer of the terminal phosphate group between ATP and AMP. Plays an important role in cellular energy homeostasis and in adenine nucleotide metabolism. This chain is Adenylate kinase, found in Borrelia garinii subsp. bavariensis (strain ATCC BAA-2496 / DSM 23469 / PBi) (Borreliella bavariensis).